Consider the following 397-residue polypeptide: Tryptophan synthase beta chain (397 aa).

Residue Lys87 is modified to N6-(pyridoxal phosphate)lysine.

It belongs to the TrpB family. As to quaternary structure, tetramer of two alpha and two beta chains. Requires pyridoxal 5'-phosphate as cofactor.

It catalyses the reaction (1S,2R)-1-C-(indol-3-yl)glycerol 3-phosphate + L-serine = D-glyceraldehyde 3-phosphate + L-tryptophan + H2O. It participates in amino-acid biosynthesis; L-tryptophan biosynthesis; L-tryptophan from chorismate: step 5/5. In terms of biological role, the beta subunit is responsible for the synthesis of L-tryptophan from indole and L-serine. The protein is Tryptophan synthase beta chain of Salmonella agona (strain SL483).